The primary structure comprises 168 residues: G/U mismatch-specific DNA glycosylase (168 aa).

It belongs to the uracil-DNA glycosylase (UDG) superfamily. TDG/mug family. As to quaternary structure, binds DNA as a monomer.

Its subcellular location is the cytoplasm. It carries out the reaction Specifically hydrolyzes mismatched double-stranded DNA and polynucleotides, releasing free uracil.. Its function is as follows. Excises ethenocytosine and uracil, which can arise by alkylation or deamination of cytosine, respectively, from the corresponding mispairs with guanine in ds-DNA. It is capable of hydrolyzing the carbon-nitrogen bond between the sugar-phosphate backbone of the DNA and the mispaired base. The complementary strand guanine functions in substrate recognition. Required for DNA damage lesion repair in stationary-phase cells. The sequence is that of G/U mismatch-specific DNA glycosylase from Escherichia coli O9:H4 (strain HS).